Here is a 252-residue protein sequence, read N- to C-terminus: Small ribosomal subunit protein uS2B (252 aa).

N-acetylserine is present on Ser2. Composition is skewed to acidic residues over residues 213 to 229 (VAEE…EEVK) and 241 to 252 (EWAEENADNVEW). Residues 213–252 (VAEEAAAAEEGEEEEVKEEVTEGQAEATEWAEENADNVEW) are disordered.

The protein belongs to the universal ribosomal protein uS2 family. As to quaternary structure, component of the small ribosomal subunit. Mature ribosomes consist of a small (40S) and a large (60S) subunit. The 40S subunit contains about 33 different proteins and 1 molecule of RNA (18S). The 60S subunit contains about 49 different proteins and 3 molecules of RNA (25S, 5.8S and 5S). Interacts with RPS21.

Its subcellular location is the cytoplasm. In terms of biological role, required for the assembly and/or stability of the 40S ribosomal subunit. Required for the processing of the 20S rRNA-precursor to mature 18S rRNA in a late step of the maturation of 40S ribosomal subunits. The chain is Small ribosomal subunit protein uS2B from Saccharomyces cerevisiae (strain RM11-1a) (Baker's yeast).